The primary structure comprises 541 residues: Circadian clock oscillator protein KaiC (541 aa).

The interval 1-40 is disordered; sequence MNQSLGPSEPEKPQDNTAEDSTEPTPDNHRADLSELRGIP. KaiC domains lie at 21 to 268 and 282 to 541; these read STEP…INIF and VRVS…EEGL. A compositionally biased stretch (basic and acidic residues) spans 26 to 35; the sequence is PDNHRADLSE. The ATP site is built by glycine 70, threonine 71, glycine 72, lysine 73, threonine 74, leucine 75, serine 110, lysine 245, leucine 246, arginine 247, threonine 249, histidine 251, threonine 261, threonine 311, glycine 312, threonine 313, glycine 314, lysine 315, and threonine 316. Threonine 74 serves as a coordination point for Mg(2+). Residues threonine 316 and glutamate 339 each contribute to the Mg(2+) site. Residue tryptophan 352 coordinates ATP. Serine 452 carries the post-translational modification Phosphoserine; by autocatalysis. A Phosphothreonine; by autocatalysis modification is found at threonine 453. Residues arginine 472, lysine 478, methionine 479, arginine 480, serine 482, histidine 484, and lysine 486 each coordinate ATP.

This sequence belongs to the KaiC family. As to quaternary structure, homohexamer; hexamerization is dependent on ATP-binding. The KaiABC complex composition changes during the circadian cycle to control KaiC phosphorylation. Complexes KaiC(6), KaiA(2-4):KaiC(6), KaiB(6):KaiC(6) and KaiC(6):KaiB(6):KaiA(12) are among the most important forms, many form cooperatively. KaiC interacts with SasA, activating its autokinase function and leading to RpaA activation. The cofactor is Mg(2+). In terms of processing, phosphorylated on serine and threonine residues by autocatalysis. Has a 4 step phosphorylation cycle; the autokinase acts first on Thr-453, then Ser-452. When Ser-452 is modified KaiC switches to an autophosphatase mode, acting first on phospho-Thr-453 then phospho-Ser-452.

The catalysed reaction is L-seryl-[protein] + ATP = O-phospho-L-seryl-[protein] + ADP + H(+). It carries out the reaction L-threonyl-[protein] + ATP = O-phospho-L-threonyl-[protein] + ADP + H(+). The enzyme catalyses ATP + H2O = ADP + phosphate + H(+). Its activity is regulated as follows. The interaction with KaiA enhances its phosphorylation status, while the interaction with KaiB decreases it. Central component of the KaiABC oscillator complex, which constitutes the main circadian regulator in cyanobacteria. Complex composition changes during the circadian cycle to control KaiC phosphorylation. KaiA stimulates KaiC autophosphorylation, while KaiB sequesters KaiA, leading to KaiC autodephosphorylation. Clock output pathways impact the RpaA transcriptional regulator. KaiC enhances the autophosphorylation activity of SasA, which then transfers its phosphate group to RpaA to activate it. KaiB and KaiC together enhance the phospho-RpaA dephosphatase activity of CikA. Functionally, has a weak, temperature-independent ATPase activity; ATPase activity defines the circadian period. The phosphorylation state of KaiC modulates its ATPase activity and effects KaiB binding. The protein is Circadian clock oscillator protein KaiC of Parathermosynechococcus lividus (Thermostichus lividus).